The primary structure comprises 160 residues: Cyclic pyranopterin monophosphate synthase (160 aa).

Substrate is bound by residues Leu75 to His77 and Met113 to Glu114. The active site involves Asp128.

The protein belongs to the MoaC family. Homohexamer; trimer of dimers.

It catalyses the reaction (8S)-3',8-cyclo-7,8-dihydroguanosine 5'-triphosphate = cyclic pyranopterin phosphate + diphosphate. It functions in the pathway cofactor biosynthesis; molybdopterin biosynthesis. In terms of biological role, catalyzes the conversion of (8S)-3',8-cyclo-7,8-dihydroguanosine 5'-triphosphate to cyclic pyranopterin monophosphate (cPMP). The sequence is that of Cyclic pyranopterin monophosphate synthase from Haemophilus influenzae (strain PittEE).